Reading from the N-terminus, the 134-residue chain is MAKSPANNAAQRVRKKVRKNVSDGIAHVHASFNNTIITITDRQGNALSWASSGGQGFKGSRKSTPFAAQVASEVAGRAAIEQGIKNLDVEIKGPGPGRESSVRALGALGIRITSISDVTPVPHNGCRPQKRRRI.

It belongs to the universal ribosomal protein uS11 family. In terms of assembly, part of the 30S ribosomal subunit. Interacts with proteins S7 and S18. Binds to IF-3.

Functionally, located on the platform of the 30S subunit, it bridges several disparate RNA helices of the 16S rRNA. Forms part of the Shine-Dalgarno cleft in the 70S ribosome. This is Small ribosomal subunit protein uS11 from Paracidovorax citrulli (strain AAC00-1) (Acidovorax citrulli).